The following is a 258-amino-acid chain: MSDLKAAALRALKLMDLTTLNDDDTDAKVIALCHDAKTPVGNTAAICIYPRFIPIAKKTLREQGTPEVRIATVTNFPHGNDDIEIAVAETKAAVAYGADEVDVVFPYRALMAGDEKVGFELVKQCKEACGDILLKVIIETGELKEEALIKKASQICIEAGADFIKTSTGKVPVNATPEYARMMLEVIRDMGVAEKVGFKPAGGVRTAEDAAAYLAMADDILGSEWADNMHYRFGASSLLTNLLNTLEVTDQVADPAAY.

Aspartate 102 acts as the Proton donor/acceptor in catalysis. Lysine 165 acts as the Schiff-base intermediate with acetaldehyde in catalysis. The Proton donor/acceptor role is filled by lysine 199.

The protein belongs to the DeoC/FbaB aldolase family. DeoC type 2 subfamily.

The protein resides in the cytoplasm. It carries out the reaction 2-deoxy-D-ribose 5-phosphate = D-glyceraldehyde 3-phosphate + acetaldehyde. The protein operates within carbohydrate degradation; 2-deoxy-D-ribose 1-phosphate degradation; D-glyceraldehyde 3-phosphate and acetaldehyde from 2-deoxy-alpha-D-ribose 1-phosphate: step 2/2. In terms of biological role, catalyzes a reversible aldol reaction between acetaldehyde and D-glyceraldehyde 3-phosphate to generate 2-deoxy-D-ribose 5-phosphate. This chain is Deoxyribose-phosphate aldolase 2 (deoC2), found in Vibrio vulnificus (strain YJ016).